We begin with the raw amino-acid sequence, 874 residues long: Alanine--tRNA ligase (874 aa).

Zn(2+) is bound by residues His-562, His-566, Cys-665, and His-669.

This sequence belongs to the class-II aminoacyl-tRNA synthetase family. Requires Zn(2+) as cofactor.

It localises to the cytoplasm. The enzyme catalyses tRNA(Ala) + L-alanine + ATP = L-alanyl-tRNA(Ala) + AMP + diphosphate. Its function is as follows. Catalyzes the attachment of alanine to tRNA(Ala) in a two-step reaction: alanine is first activated by ATP to form Ala-AMP and then transferred to the acceptor end of tRNA(Ala). Also edits incorrectly charged Ser-tRNA(Ala) and Gly-tRNA(Ala) via its editing domain. The sequence is that of Alanine--tRNA ligase from Pseudomonas aeruginosa (strain ATCC 15692 / DSM 22644 / CIP 104116 / JCM 14847 / LMG 12228 / 1C / PRS 101 / PAO1).